Consider the following 556-residue polypeptide: Butanoate--CoA ligase AAE1 (556 aa).

The Microbody targeting signal motif lies at 554 to 556; the sequence is SKL.

Belongs to the ATP-dependent AMP-binding enzyme family. In terms of tissue distribution, expressed in roots, leaves, stems, flowers and developing seeds.

Its subcellular location is the peroxisome. The catalysed reaction is butanoate + ATP + CoA = butanoyl-CoA + AMP + diphosphate. It catalyses the reaction hexanoate + ATP + CoA = hexanoyl-CoA + AMP + diphosphate. The enzyme catalyses pentanoate + ATP + CoA = pentanoyl-CoA + AMP + diphosphate. It carries out the reaction 4-methylpentanoate + ATP + CoA = 4-methylpentanoyl-CoA + AMP + diphosphate. Functionally, catalyzes the ligation of CoA on butanoate to produce butanoyl-CoA. Can also use hexanoate, pentanoate and 4-methylpentanoate as substrates with a lower efficiency. This Arabidopsis thaliana (Mouse-ear cress) protein is Butanoate--CoA ligase AAE1.